The primary structure comprises 571 residues: Cationic amino acid transporter 8 (571 aa).

A glycan (N-linked (GlcNAc...) asparagine) is linked at asparagine 35. A run of 6 helical transmembrane segments spans residues 39 to 59 (FWLLVIIVIYTATSACIYFDW), 94 to 114 (SLYPITLAIHFTMSVFCGFLY), 117 to 137 (IGPKFTAIIGQMCNIMSWVFL), 148 to 168 (FLSFVFLGLGADTAFIPILTI), 177 to 197 (TFILTVVGAAASLSYAVPATL), and 217 to 237 (IFLILVPCLLVATFLLPLMPF). N-linked (GlcNAc...) asparagine glycosylation is found at asparagine 298, asparagine 325, and asparagine 346. The chain crosses the membrane as a helical span at residues 365-385 (LFFKVLLSYPSICIIVYFILF). The N-linked (GlcNAc...) asparagine glycan is linked to asparagine 386. A run of 5 helical transmembrane segments spans residues 405 to 425 (SIINIINILMPISCIPCIIFG), 433 to 453 (SAIIIILMNAFSALMHLTALI), 461 to 481 (VSAFLYMCVTSIYTSQIYCFI), 488 to 508 (VVFGKLLGFASLCGGLFSLLC), and 528 to 548 (VVLLLVIAFILMFLPLTVLYF).

The protein belongs to the SLC43A transporter (TC 2.A.1.44) family.

The protein resides in the membrane. It catalyses the reaction L-arginine(in) = L-arginine(out). In terms of biological role, sodium-independent cationic amino acid transporter. Transports L-arginine, L-lysine, L-histidine and L-ornithine. The polypeptide is Cationic amino acid transporter 8 (Plasmodium vivax (strain Salvador I)).